Reading from the N-terminus, the 224-residue chain is Uracil phosphoribosyltransferase (224 aa).

Residue 38–42 (KGLVK) coordinates GTP. 5-phospho-alpha-D-ribose 1-diphosphate is bound by residues Arg87, Arg112, and 140–148 (DPMIATGST). Uracil is bound by residues Ile204 and 209–211 (GDA). Asp210 contributes to the 5-phospho-alpha-D-ribose 1-diphosphate binding site.

Belongs to the UPRTase family. Mg(2+) serves as cofactor.

It catalyses the reaction UMP + diphosphate = 5-phospho-alpha-D-ribose 1-diphosphate + uracil. It participates in pyrimidine metabolism; UMP biosynthesis via salvage pathway; UMP from uracil: step 1/1. Its activity is regulated as follows. Allosterically activated by GTP. Catalyzes the conversion of uracil and 5-phospho-alpha-D-ribose 1-diphosphate (PRPP) to UMP and diphosphate. This chain is Uracil phosphoribosyltransferase, found in Thermococcus gammatolerans (strain DSM 15229 / JCM 11827 / EJ3).